The chain runs to 541 residues: Membrane protein insertase YidC (541 aa).

5 helical membrane-spanning segments follow: residues 6 to 26, 356 to 376, 430 to 450, 463 to 483, and 498 to 518; these read FFLIIAIFLSIFLLWDKWEIT, IIHSWGYSIIILTLLIKLAFY, LPILVQIPVFISLYWVLLEMV, LSAPDPYYILPLIMGISMFIQ, and IMMALPFVFTIFFLWFPSGLV.

It belongs to the OXA1/ALB3/YidC family. Type 1 subfamily. Interacts with the Sec translocase complex via SecD. Specifically interacts with transmembrane segments of nascent integral membrane proteins during membrane integration.

It localises to the cell inner membrane. Required for the insertion and/or proper folding and/or complex formation of integral membrane proteins into the membrane. Involved in integration of membrane proteins that insert both dependently and independently of the Sec translocase complex, as well as at least some lipoproteins. Aids folding of multispanning membrane proteins. This Vesicomyosocius okutanii subsp. Calyptogena okutanii (strain HA) protein is Membrane protein insertase YidC.